We begin with the raw amino-acid sequence, 121 residues long: NAD(P)H-quinone oxidoreductase subunit M (121 aa).

It belongs to the complex I NdhM subunit family. NDH-1 can be composed of about 15 different subunits; different subcomplexes with different compositions have been identified which probably have different functions.

The protein localises to the cellular thylakoid membrane. The catalysed reaction is a plastoquinone + NADH + (n+1) H(+)(in) = a plastoquinol + NAD(+) + n H(+)(out). It carries out the reaction a plastoquinone + NADPH + (n+1) H(+)(in) = a plastoquinol + NADP(+) + n H(+)(out). NDH-1 shuttles electrons from an unknown electron donor, via FMN and iron-sulfur (Fe-S) centers, to quinones in the respiratory and/or the photosynthetic chain. The immediate electron acceptor for the enzyme in this species is believed to be plastoquinone. Couples the redox reaction to proton translocation, and thus conserves the redox energy in a proton gradient. Cyanobacterial NDH-1 also plays a role in inorganic carbon-concentration. The protein is NAD(P)H-quinone oxidoreductase subunit M of Synechococcus sp. (strain JA-2-3B'a(2-13)) (Cyanobacteria bacterium Yellowstone B-Prime).